The primary structure comprises 269 residues: Ribosomal RNA small subunit methyltransferase J (269 aa).

S-adenosyl-L-methionine is bound by residues Glu-125 to Arg-126 and Asp-179.

It belongs to the methyltransferase superfamily. RsmJ family.

It is found in the cytoplasm. It carries out the reaction guanosine(1516) in 16S rRNA + S-adenosyl-L-methionine = N(2)-methylguanosine(1516) in 16S rRNA + S-adenosyl-L-homocysteine + H(+). Specifically methylates the guanosine in position 1516 of 16S rRNA. The chain is Ribosomal RNA small subunit methyltransferase J from Pseudomonas syringae pv. syringae (strain B728a).